A 354-amino-acid chain; its full sequence is Stearoyl-CoA desaturase (354 aa).

The disordered stretch occupies residues 1 to 28 (MPGHLLQEEMTSSYTTTTTTITEPPSES). The Cytoplasmic portion of the chain corresponds to 1–67 (MPGHLLQEEM…EGPPPKLEYV (67 aa)). The span at 8 to 28 (EEMTSSYTTTTTTITEPPSES) shows a compositional bias: low complexity. The helical transmembrane segment at 68-88 (WRNIILMALLHLGALYGLVLV) threads the bilayer. Asn70 lines the substrate pocket. Over 89–92 (PSSK) the chain is Lumenal. A helical transmembrane segment spans residues 93 to 113 (VYTLLWAFVYYVISIEGIGAG). Residues 114 to 212 (VHRLWSHRTY…EKLVMFQRRY (99 aa)) lie on the Cytoplasmic side of the membrane. Fe cation contacts are provided by His115 and His120. The short motif at 115-120 (HRLWSH) is the Histidine box-1 element. Substrate is bound by residues Asn143, Arg150, and Asp151. Fe cation-binding residues include His152, His155, and His156. The Histidine box-2 signature appears at 152–156 (HRAHH). Substrate-binding residues include Arg183 and Lys184. The residue at position 198 (Ser198) is a Phosphoserine. Residues 213-232 (YKPAILLMCFILPTFVPWYF) form a helical membrane-spanning segment. Residues 233 to 236 (WGEA) are Lumenal-facing. The chain crosses the membrane as a helical span at residues 237–258 (FVNSLCVSTFLRYTLVLNATWL). Substrate is bound at residue Trp257. Topologically, residues 259–354 (VNSAAHLYGY…RTGDGSCKSG (96 aa)) are cytoplasmic. Fe cation is bound by residues His264, His293, His296, and His297. The Histidine box-3 signature appears at 293 to 297 (HNYHH).

The protein belongs to the fatty acid desaturase type 1 family. Fe(2+) serves as cofactor.

It localises to the endoplasmic reticulum membrane. The enzyme catalyses octadecanoyl-CoA + 2 Fe(II)-[cytochrome b5] + O2 + 2 H(+) = (9Z)-octadecenoyl-CoA + 2 Fe(III)-[cytochrome b5] + 2 H2O. It carries out the reaction hexadecanoyl-CoA + 2 Fe(II)-[cytochrome b5] + O2 + 2 H(+) = (9Z)-hexadecenoyl-CoA + 2 Fe(III)-[cytochrome b5] + 2 H2O. Stearoyl-CoA desaturase that utilizes O(2) and electrons from reduced cytochrome b5 to introduce the first double bond into saturated fatty acyl-CoA substrates. Catalyzes the insertion of a cis double bond at the delta-9 position into fatty acyl-CoA substrates including palmitoyl-CoA and stearoyl-CoA. Gives rise to a mixture of 16:1 and 18:1 unsaturated fatty acids. Plays an important role in lipid biosynthesis. Plays an important role in regulating the expression of genes that are involved in lipogenesis and in regulating mitochondrial fatty acid oxidation. Plays an important role in body energy homeostasis. Contributes to the biosynthesis of membrane phospholipids, cholesterol esters and triglycerides. The protein is Stearoyl-CoA desaturase (SCD) of Mesocricetus auratus (Golden hamster).